A 321-amino-acid chain; its full sequence is Glycerol-3-phosphate dehydrogenase [NAD(P)+] (321 aa).

NADPH contacts are provided by S14, F15, R35, and K109. The sn-glycerol 3-phosphate site is built by K109 and G137. A141 serves as a coordination point for NADPH. Residues K192, D252, S262, R263, and N264 each contribute to the sn-glycerol 3-phosphate site. K192 functions as the Proton acceptor in the catalytic mechanism. NADPH is bound at residue R263. NADPH-binding residues include L287 and E289.

The protein belongs to the NAD-dependent glycerol-3-phosphate dehydrogenase family.

It localises to the cytoplasm. The catalysed reaction is sn-glycerol 3-phosphate + NAD(+) = dihydroxyacetone phosphate + NADH + H(+). It carries out the reaction sn-glycerol 3-phosphate + NADP(+) = dihydroxyacetone phosphate + NADPH + H(+). It participates in membrane lipid metabolism; glycerophospholipid metabolism. In terms of biological role, catalyzes the reduction of the glycolytic intermediate dihydroxyacetone phosphate (DHAP) to sn-glycerol 3-phosphate (G3P), the key precursor for phospholipid synthesis. In Rickettsia felis (strain ATCC VR-1525 / URRWXCal2) (Rickettsia azadi), this protein is Glycerol-3-phosphate dehydrogenase [NAD(P)+].